The sequence spans 267 residues: S-adenosylmethionine decarboxylase proenzyme (267 aa).

S114 functions as the Schiff-base intermediate with substrate; via pyruvic acid in the catalytic mechanism. S114 is subject to Pyruvic acid (Ser); by autocatalysis. H119 serves as the catalytic Proton acceptor; for processing activity. Residue C142 is the Proton donor; for catalytic activity of the active site.

This sequence belongs to the prokaryotic AdoMetDC family. Type 2 subfamily. As to quaternary structure, heterooctamer of four alpha and four beta chains arranged as a tetramer of alpha/beta heterodimers. The cofactor is pyruvate. In terms of processing, is synthesized initially as an inactive proenzyme. Formation of the active enzyme involves a self-maturation process in which the active site pyruvoyl group is generated from an internal serine residue via an autocatalytic post-translational modification. Two non-identical subunits are generated from the proenzyme in this reaction, and the pyruvate is formed at the N-terminus of the alpha chain, which is derived from the carboxyl end of the proenzyme. The post-translation cleavage follows an unusual pathway, termed non-hydrolytic serinolysis, in which the side chain hydroxyl group of the serine supplies its oxygen atom to form the C-terminus of the beta chain, while the remainder of the serine residue undergoes an oxidative deamination to produce ammonia and the pyruvoyl group blocking the N-terminus of the alpha chain.

The enzyme catalyses S-adenosyl-L-methionine + H(+) = S-adenosyl 3-(methylsulfanyl)propylamine + CO2. Its pathway is amine and polyamine biosynthesis; S-adenosylmethioninamine biosynthesis; S-adenosylmethioninamine from S-adenosyl-L-methionine: step 1/1. Catalyzes the decarboxylation of S-adenosylmethionine to S-adenosylmethioninamine (dcAdoMet), the propylamine donor required for the synthesis of the polyamines spermine and spermidine from the diamine putrescine. The sequence is that of S-adenosylmethionine decarboxylase proenzyme from Erwinia tasmaniensis (strain DSM 17950 / CFBP 7177 / CIP 109463 / NCPPB 4357 / Et1/99).